Here is a 331-residue protein sequence, read N- to C-terminus: 5-dehydro-2-deoxygluconokinase (331 aa).

Belongs to the carbohydrate kinase PfkB family.

It catalyses the reaction 5-dehydro-2-deoxy-D-gluconate + ATP = 6-phospho-5-dehydro-2-deoxy-D-gluconate + ADP + H(+). Its pathway is polyol metabolism; myo-inositol degradation into acetyl-CoA; acetyl-CoA from myo-inositol: step 5/7. Catalyzes the phosphorylation of 5-dehydro-2-deoxy-D-gluconate (2-deoxy-5-keto-D-gluconate or DKG) to 6-phospho-5-dehydro-2-deoxy-D-gluconate (DKGP). The chain is 5-dehydro-2-deoxygluconokinase from Halalkalibacterium halodurans (strain ATCC BAA-125 / DSM 18197 / FERM 7344 / JCM 9153 / C-125) (Bacillus halodurans).